The following is a 501-amino-acid chain: UDP-N-acetylmuramate--L-alanine ligase (501 aa).

130–136 (GTHGKTS) contacts ATP.

It belongs to the MurCDEF family.

The protein localises to the cytoplasm. It carries out the reaction UDP-N-acetyl-alpha-D-muramate + L-alanine + ATP = UDP-N-acetyl-alpha-D-muramoyl-L-alanine + ADP + phosphate + H(+). The protein operates within cell wall biogenesis; peptidoglycan biosynthesis. Its function is as follows. Cell wall formation. The sequence is that of UDP-N-acetylmuramate--L-alanine ligase from Nocardia farcinica (strain IFM 10152).